Reading from the N-terminus, the 404-residue chain is Argininosuccinate synthase (404 aa).

ATP-binding positions include A12 to S20 and A40. The L-citrulline site is built by Y92 and S97. G122 contacts ATP. Residues T124, N128, and D129 each contribute to the L-aspartate site. Residue N128 coordinates L-citrulline. 5 residues coordinate L-citrulline: R132, S181, S190, E266, and Y278.

Belongs to the argininosuccinate synthase family. Type 1 subfamily. As to quaternary structure, homotetramer.

Its subcellular location is the cytoplasm. It catalyses the reaction L-citrulline + L-aspartate + ATP = 2-(N(omega)-L-arginino)succinate + AMP + diphosphate + H(+). The protein operates within amino-acid biosynthesis; L-arginine biosynthesis; L-arginine from L-ornithine and carbamoyl phosphate: step 2/3. The protein is Argininosuccinate synthase of Photorhabdus laumondii subsp. laumondii (strain DSM 15139 / CIP 105565 / TT01) (Photorhabdus luminescens subsp. laumondii).